The primary structure comprises 312 residues: Olfactory receptor 2L2 (312 aa).

Residues 1-24 (MENYNQTSTDFILLGLFPQSRIGL) lie on the Extracellular side of the membrane. N-linked (GlcNAc...) asparagine glycosylation occurs at Asn-5. The helical transmembrane segment at 25-48 (FVFTLIFLIFLMALIGNLSMILLI) threads the bilayer. The Cytoplasmic segment spans residues 49 to 56 (FLDIHLHT). Residues 57 to 78 (PMYFLLSQLSLIDLNYISTIVP) form a helical membrane-spanning segment. At 79 to 99 (KMVYDFLYGNKSISFTGCGIQ) the chain is on the extracellular side. The N-linked (GlcNAc...) asparagine glycan is linked to Asn-88. A disulfide bridge links Cys-96 with Cys-188. Residues 100-119 (SFFFLTLAVAEGLLLTSMAY) form a helical membrane-spanning segment. The Cytoplasmic portion of the chain corresponds to 120–138 (DRYVAICFPLHYPIRISKR). Residues 139–157 (VCVMMITGSWMISSINSCA) traverse the membrane as a helical segment. At 158–194 (HTVYALCIPYCKSRAINHFFCDVPAMLTLACTDTWVY) the chain is on the extracellular side. A helical membrane pass occupies residues 195–218 (ESTVFLSSTIFLVLPFTGIACSYG). Residues 219 to 235 (RVLLAVYRMHSAEGRKK) are Cytoplasmic-facing. Residues 236–258 (AYSTCSTHLTVVSFYYAPFAYTY) traverse the membrane as a helical segment. Over 259-271 (VRPRSLRSPTEDK) the chain is Extracellular. A helical membrane pass occupies residues 272 to 291 (ILAVFYTILTPMLNPIIYSL). Over 292-312 (RNKEVMGALTQVIQKIFSVKM) the chain is Cytoplasmic.

It belongs to the G-protein coupled receptor 1 family.

The protein resides in the cell membrane. In terms of biological role, odorant receptor. In Homo sapiens (Human), this protein is Olfactory receptor 2L2 (OR2L2).